A 35-amino-acid polypeptide reads, in one-letter code: Thaumatin-like protein 6 (35 aa).

The protein belongs to the thaumatin family.

This is Thaumatin-like protein 6 from Glebionis coronaria (Crown daisy).